The sequence spans 101 residues: Movement protein (101 aa).

The chain crosses the membrane as a helical span at residues 30 to 50 (EVAILSFVALICIYLLYLWVL).

This sequence belongs to the mastrevirus movement protein family. As to quaternary structure, interacts with the capsid protein (CP). Part of a MP-CP-viral DNA complex.

The protein localises to the host membrane. Functionally, involved in the viral transport within, and between cells. The chain is Movement protein from Maize streak virus genotype D (isolate Raw) (MSV).